We begin with the raw amino-acid sequence, 190 residues long: UPF0301 protein Pfl01_5311 (190 aa).

Belongs to the UPF0301 (AlgH) family.

The sequence is that of UPF0301 protein Pfl01_5311 from Pseudomonas fluorescens (strain Pf0-1).